Consider the following 234-residue polypeptide: Isoprenyl transferase (234 aa).

The active site involves D13. D13 is a Mg(2+) binding site. Residues 14-17 (GNGR), W18, R26, H30, and 58-60 (STE) each bind substrate. N61 functions as the Proton acceptor in the catalytic mechanism. Residues W62, R64, R180, and 186–188 (RLS) contribute to the substrate site. E199 serves as a coordination point for Mg(2+).

Belongs to the UPP synthase family. Homodimer. The cofactor is Mg(2+).

Functionally, catalyzes the condensation of isopentenyl diphosphate (IPP) with allylic pyrophosphates generating different type of terpenoids. The sequence is that of Isoprenyl transferase from Helicobacter pylori (strain J99 / ATCC 700824) (Campylobacter pylori J99).